The following is an 81-amino-acid chain: Trefoil factor 1 (81 aa).

Residues 1 to 21 (MEHKVTCVLAMVLMLALSSLA) form the signal peptide. Gln-22 is modified (pyrrolidone carboxylic acid). A P-type domain is found at 26–69 (ETCAVIPRERINCGFPGVTAQQCKEKGCCFDDSVRGFPWCFRPL). Intrachain disulfides connect Cys-28-Cys-54, Cys-38-Cys-53, and Cys-48-Cys-65.

The protein localises to the secreted. Stabilizer of the mucous gel overlying the gastrointestinal mucosa that provides a physical barrier against various noxious agents. This is Trefoil factor 1 (Tff1) from Rattus norvegicus (Rat).